The following is a 234-amino-acid chain: MDTNNQQPPPSAAGIPPPPPGTTISAAGGGASYHHLLQQQQQQLQLFWTYQRQEIEQVNDFKNHQLPLARIKKIMKADEDVRMISAEAPILFAKACELFILELTIRSWLHAEENKRRTLQKNDIAAAITRTDIFDFLVDIVPRDEIKDEAAVLGGGMVVAPTASGVPYYYPPMGQPAGPGGMMIGRPAMDPNGVYVQPPSQAWQSVWQTSTGTGDDVSYGSGGSSGQGNLDGQG.

Disordered regions lie at residues 1 to 20 (MDTN…PPPP) and 205 to 234 (SVWQ…DGQG). Residues 7 to 20 (QPPPSAAGIPPPPP) show a composition bias toward pro residues. Over residues 209 to 219 (TSTGTGDDVSY) the composition is skewed to low complexity. Residues 220–234 (GSGGSSGQGNLDGQG) show a composition bias toward gly residues.

Belongs to the NFYC/HAP5 subunit family. In terms of assembly, heterotrimeric transcription factor composed of three components, NF-YA, NF-YB and NF-YC. NF-YB and NF-YC must interact and dimerize for NF-YA association and DNA binding. Ubiquitous. Present in etiolated seedlings.

The protein resides in the nucleus. Stimulates the transcription of various genes by recognizing and binding to a CCAAT motif in promoters. This Arabidopsis thaliana (Mouse-ear cress) protein is Nuclear transcription factor Y subunit C-1 (NFYC1).